Consider the following 262-residue polypeptide: 2-keto-4-pentenoate hydratase (262 aa).

Belongs to the hydratase/decarboxylase family. MhpD subfamily. A divalent metal cation serves as cofactor.

The enzyme catalyses (S)-4-hydroxy-2-oxopentanoate = (2Z)-2-hydroxypenta-2,4-dienoate + H2O. It functions in the pathway aromatic compound metabolism; 3-phenylpropanoate degradation. Functionally, catalyzes the conversion of 2-hydroxypentadienoic acid (enolic form of 2-oxopent-4-enoate) to 4-hydroxy-2-ketopentanoic acid. The chain is 2-keto-4-pentenoate hydratase from Paraburkholderia phymatum (strain DSM 17167 / CIP 108236 / LMG 21445 / STM815) (Burkholderia phymatum).